Here is a 253-residue protein sequence, read N- to C-terminus: Ubiquinone biosynthesis O-methyltransferase (253 aa).

The S-adenosyl-L-methionine site is built by arginine 47, glycine 78, aspartate 99, and methionine 141.

It belongs to the methyltransferase superfamily. UbiG/COQ3 family.

It carries out the reaction a 3-demethylubiquinol + S-adenosyl-L-methionine = a ubiquinol + S-adenosyl-L-homocysteine + H(+). The catalysed reaction is a 3-(all-trans-polyprenyl)benzene-1,2-diol + S-adenosyl-L-methionine = a 2-methoxy-6-(all-trans-polyprenyl)phenol + S-adenosyl-L-homocysteine + H(+). The protein operates within cofactor biosynthesis; ubiquinone biosynthesis. O-methyltransferase that catalyzes the 2 O-methylation steps in the ubiquinone biosynthetic pathway. This Rhodopseudomonas palustris (strain BisA53) protein is Ubiquinone biosynthesis O-methyltransferase.